The chain runs to 258 residues: MKIFHVPCLQDNYSYLIIDESTGDAAVVDPVDPEKVIASAEKHQAKIKFVLTTHHHWDHAGGNEKIKQLVPDIKVYGGSLDKVKGCTDAVDNGDKLTLGQDINILALHTPCHTKGHISYYVNGKEGENPAVFTGDTLFVAGCGKFFEGTAEQMYQSLCVTLAALPKPTQVYCGHEYTVKNLEFALTVEPNNGKIQQKLAWARQQRQADLPTIPSTLEEELETNPFMRVDKPEIQEKLGCKSPIDTMREVRNKKDQWRG.

2 residues coordinate Zn(2+): His-54 and His-56. The Fe cation site is built by Asp-58 and His-59. Positions 112 and 135 each coordinate Zn(2+). Asp-135 serves as a coordination point for Fe cation. Substrate contacts are provided by residues 144 to 146 and 174 to 176; these read KFF and HEY. A Fe cation-binding site is contributed by His-174.

The protein belongs to the metallo-beta-lactamase superfamily. Glyoxalase II family. Homodimer. Fe(2+) serves as cofactor. Zn(2+) is required as a cofactor. Requires Fe(3+) as cofactor. In terms of tissue distribution, mainly expressed in flowers and flower buds. Also detected in roots and leaves.

The protein localises to the cytoplasm. It carries out the reaction an S-(2-hydroxyacyl)glutathione + H2O = a 2-hydroxy carboxylate + glutathione + H(+). It functions in the pathway secondary metabolite metabolism; methylglyoxal degradation; (R)-lactate from methylglyoxal: step 2/2. In terms of biological role, thiolesterase that catalyzes the hydrolysis of S-D-lactoyl-glutathione to form glutathione and D-lactic acid. This is Hydroxyacylglutathione hydrolase cytoplasmic (GLX2-2) from Arabidopsis thaliana (Mouse-ear cress).